Consider the following 680-residue polypeptide: Chondroitin proteoglycan 4 (680 aa).

The signal sequence occupies residues 1 to 18; sequence MLRVNLLILLCFVPFSLN. Residues N42, N59, N72, N167, N205, N458, N472, N486, N498, N526, N527, N556, and N604 are each glycosylated (N-linked (GlcNAc...) asparagine). A disordered region spans residues 460–680; that stretch reads TKKAETTKKS…PLTTTLHELY (221 aa). Residues 484–500 are compositionally biased toward low complexity; sequence AANTTAETTKTTSANIT. Residues 520–530 are compositionally biased toward polar residues; the sequence is SLDTSGNNSTV. Composition is skewed to low complexity over residues 633–647 and 654–669; these read GEAS…SGEV and SGYS…SSGE. 2 O-linked (Xyl...) (chondroitin sulfate) serine glycosylation sites follow: S640 and S644. The N-linked (GlcNAc...) asparagine glycan is linked to N664.

In Caenorhabditis briggsae, this protein is Chondroitin proteoglycan 4 (cpg-4).